A 300-amino-acid chain; its full sequence is Cation-efflux pump FieF (300 aa).

The next 4 helical transmembrane spans lie at 12 to 32 (AALS…FAWW), 40 to 60 (LAAL…LFVV), 82 to 102 (AALA…LTGF), and 114 to 134 (PGLG…LVTF). Zn(2+) is bound by residues Asp-45 and Asp-49. Zn(2+)-binding residues include His-153 and Asp-157. A helical transmembrane segment spans residues 164–184 (ILIALALSWYGFHRADALFAL).

The protein belongs to the cation diffusion facilitator (CDF) transporter (TC 2.A.4) family. FieF subfamily. As to quaternary structure, homodimer.

It is found in the cell inner membrane. It catalyses the reaction Zn(2+)(in) + H(+)(out) = Zn(2+)(out) + H(+)(in). The catalysed reaction is Cd(2+)(in) + H(+)(out) = Cd(2+)(out) + H(+)(in). It carries out the reaction Fe(2+)(in) + H(+)(out) = Fe(2+)(out) + H(+)(in). Its function is as follows. Divalent metal cation transporter which exports Zn(2+), Cd(2+) and possibly Fe(2+). May be involved in zinc and iron detoxification by efflux. The polypeptide is Cation-efflux pump FieF (Yersinia enterocolitica serotype O:8 / biotype 1B (strain NCTC 13174 / 8081)).